The sequence spans 210 residues: NDR1/HIN1-like protein 12 (210 aa).

The helical transmembrane segment at 23–43 (GVIIGFIIIVLITIFLVWIIL) threads the bilayer. N61 is a glycosylation site (N-linked (GlcNAc...) asparagine).

As to quaternary structure, may form oligomers or be a component of larger protein complex in plasma membranes. As to expression, expressed in leaves, stems and flowers, and, to a lower extent, in siliques and roots.

The protein resides in the cell membrane. Its function is as follows. May play a role in plant immunity. The protein is NDR1/HIN1-like protein 12 of Arabidopsis thaliana (Mouse-ear cress).